Reading from the N-terminus, the 393-residue chain is MTKARKALENYRRVVIKIGSALLVDRRTGLKKSWLDALCADIAALRAKGVEVLVVSSGAIALGRTVLDLPAGALKLEESQAAAAVGQIVLARAWSESLSTHAIVAGQILLTLGDTEERRRYLNARATIGQLLKLGSVPIINENDTVATTEIRYGDNDRLAARVATMVGADLLVLLSDIDGLYTAPPHLDPNARFLETVAEITPEIEAMAGGAASELSRGGMRTKIDAGKIATTAGCAMIIASGKPDHPLAAIEAGARSSWFAPSGSPVTARKTWIAGQLLPAGSLSIDAGAETALRSGKSLLPAGVRQVTGSFSRGDTIAIIGASGREIARGLAGYDADEARQIAGKKSAEIAAILGYAGRTAMVHRDDLVMTAPSGARLVEESDEGKGKLHA.

K17 contacts ATP. Residues S57, D144, and N156 each coordinate substrate. 176-177 (SD) provides a ligand contact to ATP. Residues 282–359 (AGSLSIDAGA…AEIAAILGYA (78 aa)) form the PUA domain.

Belongs to the glutamate 5-kinase family.

The protein localises to the cytoplasm. It carries out the reaction L-glutamate + ATP = L-glutamyl 5-phosphate + ADP. It participates in amino-acid biosynthesis; L-proline biosynthesis; L-glutamate 5-semialdehyde from L-glutamate: step 1/2. In terms of biological role, catalyzes the transfer of a phosphate group to glutamate to form L-glutamate 5-phosphate. In Rhizobium meliloti (strain 1021) (Ensifer meliloti), this protein is Glutamate 5-kinase 1.